A 296-amino-acid polypeptide reads, in one-letter code: MANLNKRPDWIKVKAPNSTEYYNTKDLIKNLRLNTVCEEAACPNIGECWSKKHTTVMILGSVCTRACRFCNVKTGRPDLLDPYEPQRLAEAVQKLNLKHVVITSVDRDDLEDGGASHFAECISEIRKSSPNTTIEILTPDFLRKEGAAEIIANAKPDVFNHNVETVPSLYKTIRPGARYYNSLSLLHNIKKLSPEIFTKSGMMVGLGEEINEVVQVIDDLREAKVDFLTIGQYLQPTKNHAEVAKYVTPEEFKYLERVAKTKGFLMVSASPLTRSSYHADEDFQKLKENYQQKLVS.

The [4Fe-4S] cluster site is built by Cys37, Cys42, Cys48, Cys63, Cys67, Cys70, and Ser276. Residues 49–265 (WSKKHTTVMI…ERVAKTKGFL (217 aa)) form the Radical SAM core domain.

This sequence belongs to the radical SAM superfamily. Lipoyl synthase family. The cofactor is [4Fe-4S] cluster.

The protein resides in the cytoplasm. It carries out the reaction [[Fe-S] cluster scaffold protein carrying a second [4Fe-4S](2+) cluster] + N(6)-octanoyl-L-lysyl-[protein] + 2 oxidized [2Fe-2S]-[ferredoxin] + 2 S-adenosyl-L-methionine + 4 H(+) = [[Fe-S] cluster scaffold protein] + N(6)-[(R)-dihydrolipoyl]-L-lysyl-[protein] + 4 Fe(3+) + 2 hydrogen sulfide + 2 5'-deoxyadenosine + 2 L-methionine + 2 reduced [2Fe-2S]-[ferredoxin]. It participates in protein modification; protein lipoylation via endogenous pathway; protein N(6)-(lipoyl)lysine from octanoyl-[acyl-carrier-protein]: step 2/2. In terms of biological role, catalyzes the radical-mediated insertion of two sulfur atoms into the C-6 and C-8 positions of the octanoyl moiety bound to the lipoyl domains of lipoate-dependent enzymes, thereby converting the octanoylated domains into lipoylated derivatives. This Rickettsia conorii (strain ATCC VR-613 / Malish 7) protein is Lipoyl synthase.